A 283-amino-acid polypeptide reads, in one-letter code: Pantothenate synthetase (283 aa).

Position 30 to 37 (30 to 37 (MGALHEGH)) interacts with ATP. H37 functions as the Proton donor in the catalytic mechanism. Q61 serves as a coordination point for (R)-pantoate. Beta-alanine is bound at residue Q61. Residue 150–153 (GRKD) participates in ATP binding. Q156 contacts (R)-pantoate. ATP contacts are provided by residues V179 and 187–190 (MSSR).

This sequence belongs to the pantothenate synthetase family. As to quaternary structure, homodimer.

The protein localises to the cytoplasm. It carries out the reaction (R)-pantoate + beta-alanine + ATP = (R)-pantothenate + AMP + diphosphate + H(+). Its pathway is cofactor biosynthesis; (R)-pantothenate biosynthesis; (R)-pantothenate from (R)-pantoate and beta-alanine: step 1/1. In terms of biological role, catalyzes the condensation of pantoate with beta-alanine in an ATP-dependent reaction via a pantoyl-adenylate intermediate. The protein is Pantothenate synthetase of Rhodopirellula baltica (strain DSM 10527 / NCIMB 13988 / SH1).